Consider the following 433-residue polypeptide: tRNA modification GTPase MnmE (433 aa).

(6S)-5-formyl-5,6,7,8-tetrahydrofolate contacts are provided by R24, E81, and R120. The TrmE-type G domain maps to 216 to 359 (GVEIVVLGAP…LLAALRARVE (144 aa)). A K(+)-binding site is contributed by N226. GTP contacts are provided by residues 226–231 (NAGKST), 245–251 (SDIPGTT), 270–273 (DTAG), and 340–342 (SAR). S230 serves as a coordination point for Mg(2+). K(+) contacts are provided by S245, I247, and T250. T251 contacts Mg(2+). K433 is a binding site for (6S)-5-formyl-5,6,7,8-tetrahydrofolate.

Belongs to the TRAFAC class TrmE-Era-EngA-EngB-Septin-like GTPase superfamily. TrmE GTPase family. Homodimer. Heterotetramer of two MnmE and two MnmG subunits. It depends on K(+) as a cofactor.

The protein localises to the cytoplasm. In terms of biological role, exhibits a very high intrinsic GTPase hydrolysis rate. Involved in the addition of a carboxymethylaminomethyl (cmnm) group at the wobble position (U34) of certain tRNAs, forming tRNA-cmnm(5)s(2)U34. This chain is tRNA modification GTPase MnmE, found in Acidiphilium cryptum (strain JF-5).